The sequence spans 163 residues: uncharacterized protein (163 aa).

A disordered region spans residues 30–163 (GNENTSVSSD…IYKKLGKKKR (134 aa)). The span at 88–118 (ERQLQKKKEAEKIEGGKNHDNLKRKLNKVGD) shows a compositional bias: basic and acidic residues. The span at 119–133 (ELNEQQSDTDDDDDD) shows a compositional bias: acidic residues. The residue at position 125 (Ser125) is a Phosphoserine. A Phosphothreonine modification is found at Thr127.

It is found in the nucleus. The protein localises to the nucleolus. This is an uncharacterized protein from Schizosaccharomyces pombe (strain 972 / ATCC 24843) (Fission yeast).